We begin with the raw amino-acid sequence, 249 residues long: NAD kinase (249 aa).

Residue aspartate 45 is the Proton acceptor of the active site. NAD(+) contacts are provided by residues 45–46 (DG), arginine 50, 110–111 (NE), aspartate 138, and 149–154 (SGWGMS).

This sequence belongs to the NAD kinase family. A divalent metal cation is required as a cofactor.

It is found in the cytoplasm. The catalysed reaction is NAD(+) + ATP = ADP + NADP(+) + H(+). Functionally, involved in the regulation of the intracellular balance of NAD and NADP, and is a key enzyme in the biosynthesis of NADP. Catalyzes specifically the phosphorylation on 2'-hydroxyl of the adenosine moiety of NAD to yield NADP. The polypeptide is NAD kinase (Saccharolobus solfataricus (strain ATCC 35092 / DSM 1617 / JCM 11322 / P2) (Sulfolobus solfataricus)).